Consider the following 130-residue polypeptide: MVSFITSRQLKGLIENQRKDFQVVDLRREDFARDHITNAWHVPVTAQITEKQLNQLIKGLSDTFSSSQFVKVIFHCTGSKNRGPKVAAKFETYLQEEDITSKFESCILVGGFYAWETHCRESNLKLIVSG.

The Rhodanese domain maps to 17–124 (QRKDFQVVDL…WETHCRESNL (108 aa)).

In terms of biological role, involved in resistance to arsenic compounds. The chain is Arsenical-resistance protein 2 (ARR2) from Saccharomyces cerevisiae (strain ATCC 204508 / S288c) (Baker's yeast).